The sequence spans 1373 residues: DNA-directed RNA polymerase subunit beta (1373 aa).

This sequence belongs to the RNA polymerase beta chain family. The RNAP catalytic core consists of 2 alpha, 1 beta, 1 beta' and 1 omega subunit. When a sigma factor is associated with the core the holoenzyme is formed, which can initiate transcription.

The catalysed reaction is RNA(n) + a ribonucleoside 5'-triphosphate = RNA(n+1) + diphosphate. In terms of biological role, DNA-dependent RNA polymerase catalyzes the transcription of DNA into RNA using the four ribonucleoside triphosphates as substrates. This chain is DNA-directed RNA polymerase subunit beta, found in Rhodopseudomonas palustris (strain BisB18).